We begin with the raw amino-acid sequence, 215 residues long: MSLFGLGSRNQKTFRPKKSAPTGSKGAQLQKHIDATLGSGNLREAVKLPPGEDINEWLAVNTVDFFNQVNTMFGTLTEFCTPSNCPTMTAGPKYEYRWADGVTIKKPIEVSAPKYVEYLMDWIESQLDDETIFPQRLGAPFPPNFRDVVKTIFKRLFRVYAHVYHSHFQKIVSLKEEAHLNTCFKHFVLFTWEFRLIEKAELAPLEDLVDSIIQL.

Residues 1–29 (MSLFGLGSRNQKTFRPKKSAPTGSKGAQL) form a disordered region. 4 residues coordinate Zn(2+): C80, C85, H162, and H167.

Belongs to the MOB1/phocein family. Isoform 1 is constitutively expressed. Isoform 2 is specifically expressed in flowers bud during sporogenesis and gametogenesis.

It localises to the cytoplasm. It is found in the cytoskeleton. Its subcellular location is the phragmoplast. The polypeptide is MOB kinase activator-like 1A (Medicago sativa subsp. falcata (Sickle medic)).